A 356-amino-acid chain; its full sequence is MGVQEMDPLTQLSLPPGFRFYPTDEELLVQYLCRKVAGHDFSLQIIAEIDLYKFDPWVLPSKAIFGEKEWYFFSPRDRKYPNGSRPNRVAGSGYWKATGTDKVITTDGRKVGIKKALVFYIGKAPKGTKTNWIMHEYRLSEPTTKTGSSRLDDWVLCRIYKKNSGGQKSSCSDLQNKDISHASSSSSSSQFDDMLESLPAIEDRYFSLPRVNSIRNFQQNDKINLQQLSSGNFDWAAMAGLNSFPELRTGNQVPTPGNQTPVLINTNQYHNHNDNLNNFNEFFANSTALNFHGEVKFEGGVDQEVESSVRAQRLNSVNPGFFQENSTGFSSSYTNSVPDPFGIRYPTQTVNMGFTG.

The NAC domain maps to 14-162; it reads LPPGFRFYPT…DWVLCRIYKK (149 aa). The DNA-binding element occupies 111-168; sequence VGIKKALVFYIGKAPKGTKTNWIMHEYRLSEPTTKTGSSRLDDWVLCRIYKKNSGGQK. The segment at 163 to 191 is disordered; the sequence is NSGGQKSSCSDLQNKDISHASSSSSSSQF. Over residues 164–174 the composition is skewed to polar residues; the sequence is SGGQKSSCSDL.

As to expression, expressed in guard cells of the epidermis.

It is found in the nucleus. In terms of biological role, transcription factor that acts downstream of MYC2 in the jasmonate-mediated response to Botrytis cinerea infection. With MYC2 forms a transcription module that regulates wounding-responsive genes. Involved in jasmonate- and coronatine-mediated stomatal reopening in response to Pseudomonas syringae pv tomato DC3000 infection. Regulates the expression of threonine deaminase 2 (TD2) through promoter binding. This chain is NAC domain-containing protein JA2L, found in Solanum lycopersicum (Tomato).